Reading from the N-terminus, the 38-residue chain is Toxin CSTX-16 (38 aa).

Residues Gln-19 and Gln-38 each carry the glutamine amide modification.

This sequence belongs to the cationic peptide 04 (cupiennin) family. 10 (double chain) subfamily. As to expression, expressed by the venom gland.

It is found in the secreted. This Cupiennius salei (American wandering spider) protein is Toxin CSTX-16.